We begin with the raw amino-acid sequence, 164 residues long: Phosphopantetheine adenylyltransferase (164 aa).

Ser10 is a substrate binding site. ATP contacts are provided by residues 10-11 (SF) and His18. Substrate contacts are provided by Lys42, Leu74, and Arg88. ATP contacts are provided by residues 89–91 (GLR), Glu99, and 124–130 (YAFLSSS).

This sequence belongs to the bacterial CoaD family. Homohexamer. Mg(2+) is required as a cofactor.

It is found in the cytoplasm. The catalysed reaction is (R)-4'-phosphopantetheine + ATP + H(+) = 3'-dephospho-CoA + diphosphate. It functions in the pathway cofactor biosynthesis; coenzyme A biosynthesis; CoA from (R)-pantothenate: step 4/5. Its function is as follows. Reversibly transfers an adenylyl group from ATP to 4'-phosphopantetheine, yielding dephospho-CoA (dPCoA) and pyrophosphate. The chain is Phosphopantetheine adenylyltransferase from Geobacillus thermodenitrificans (strain NG80-2).